Reading from the N-terminus, the 319-residue chain is Putative binding protein BAB2_1146 (319 aa).

Positions 1-22 (MKRRTFLAMSLALTFLPSVALA) are cleaved as a signal peptide.

The protein belongs to the bacterial solute-binding protein SsuA/TauA family. The complex is composed of two ATP-binding proteins (BAB2_1147), two transmembrane proteins (BAB2_1148) and a solute-binding protein (BAB2_1146).

The protein localises to the periplasm. Its function is as follows. Probably part of an ABC transporter complex. This is Putative binding protein BAB2_1146 from Brucella abortus (strain 2308).